Here is a 440-residue protein sequence, read N- to C-terminus: Ribosomal protein uS12 methylthiotransferase RimO (440 aa).

Positions 6–116 constitute an MTTase N-terminal domain; that stretch reads PKVGFVSLGC…VVTAVHEVVP (111 aa). [4Fe-4S] cluster is bound by residues Cys-15, Cys-51, Cys-80, Cys-149, Cys-153, and Cys-156. Positions 135–373 constitute a Radical SAM core domain; that stretch reads LTPRHYAYLK…MAHQQAISAA (239 aa). The region spanning 376-440 is the TRAM domain; it reads QLKVGKEIEV…DEYDLWAELV (65 aa).

It belongs to the methylthiotransferase family. RimO subfamily. [4Fe-4S] cluster serves as cofactor.

It is found in the cytoplasm. It carries out the reaction L-aspartate(89)-[ribosomal protein uS12]-hydrogen + (sulfur carrier)-SH + AH2 + 2 S-adenosyl-L-methionine = 3-methylsulfanyl-L-aspartate(89)-[ribosomal protein uS12]-hydrogen + (sulfur carrier)-H + 5'-deoxyadenosine + L-methionine + A + S-adenosyl-L-homocysteine + 2 H(+). Functionally, catalyzes the methylthiolation of an aspartic acid residue of ribosomal protein uS12. In Pseudomonas aeruginosa (strain ATCC 15692 / DSM 22644 / CIP 104116 / JCM 14847 / LMG 12228 / 1C / PRS 101 / PAO1), this protein is Ribosomal protein uS12 methylthiotransferase RimO.